The sequence spans 630 residues: Cyclin-T1-2 (630 aa).

The span at 288 to 297 (QSSLSVSSSS) shows a compositional bias: low complexity. Disordered stretches follow at residues 288 to 313 (QSSL…DSSQ) and 410 to 439 (RSGD…VEPP). Over residues 421–439 (GGSSLTDVDSKSTQSVEPP) the composition is skewed to polar residues.

The protein belongs to the cyclin family. Cyclin T subfamily.

The polypeptide is Cyclin-T1-2 (CYCT1_2) (Oryza sativa subsp. japonica (Rice)).